The following is a 313-amino-acid chain: Lactamase-like protein nscB (313 aa).

His97, His99, Asp101, and His102 together coordinate Zn(2+). Catalysis depends on Asp101, which acts as the Proton donor/acceptor.

Belongs to the metallo-beta-lactamase superfamily. Zn(2+) serves as cofactor.

The protein operates within secondary metabolite biosynthesis. In terms of biological role, lactamase-like protein; part of the gene cluster that mediates the biosynthesis of neosartoricin B, a prenylated anthracenone that probably exhibits T-cell antiproliferative activity, suggestive of a physiological role as an immunosuppressive agent. The non-reducing polyketide synthase nscA probably synthesizes and cyclizes the decaketide backbone. The hydrolase nscB then mediates the product release through hydrolysis followed by spontaneous decarboxylation. The prenyltransferase nscD catalyzes the addition of the dimethylallyl group to the aromatic C5. The FAD-dependent monooxygenase nscC is then responsible for the stereospecific hydroxylation at C2. Neosartoricin B can be converted into two additional compounds neosartoricins C and D. Neosartoricin C is a spirocyclic compound that is cyclized through the attack of C3 hydroxyl on C14, followed by dehydration. On the other hand, neosartoricin D is a further cyclized compound in which attack of C2 on C14 in neosartoricin C results in the formation of the acetal-containing dioxabicyclo-octanone ring. Both of these compounds are novel and possibly represent related metabolites of the gene cluster. In Arthroderma gypseum (strain ATCC MYA-4604 / CBS 118893) (Microsporum gypseum), this protein is Lactamase-like protein nscB.